The following is a 303-amino-acid chain: MKSNKIKYLGCFVGATKPDFMLGMVKTVVDYGATSFMFYSGPPQSFRRTPTAQFKLDLAKAYLAKHNLGDLGDNYVVHAPYLINLANGDSTKRERSFNFFLDELKRTNELGAKYFVLHPGSALNVKDKTQALDHLATELNRAISMTKDTIICLETMADKGQQICSKFEELRYVIDQISDKSRIGVCFDTCHVHDAGYDLAKTQELIDHFDQVIGLKYLYVIHLNDSKNPMGARKDRHANIGYGKIGFENLLNFIYHKEICNKIIILETPWIDDPIRGEVPLYKEEIEMIRNKKFVEGLVNEES.

Zn(2+) is bound by residues histidine 78, histidine 118, glutamate 154, aspartate 188, histidine 191, histidine 222, aspartate 235, histidine 237, and glutamate 267.

The protein belongs to the AP endonuclease 2 family. Zn(2+) serves as cofactor.

It carries out the reaction Endonucleolytic cleavage to 5'-phosphooligonucleotide end-products.. Functionally, endonuclease IV plays a role in DNA repair. It cleaves phosphodiester bonds at apurinic or apyrimidinic (AP) sites, generating a 3'-hydroxyl group and a 5'-terminal sugar phosphate. The polypeptide is Probable endonuclease 4 (Mycoplasmoides gallisepticum (strain R(low / passage 15 / clone 2)) (Mycoplasma gallisepticum)).